Here is a 237-residue protein sequence, read N- to C-terminus: Phosphoribosylaminoimidazole-succinocarboxamide synthase (237 aa).

It belongs to the SAICAR synthetase family.

It catalyses the reaction 5-amino-1-(5-phospho-D-ribosyl)imidazole-4-carboxylate + L-aspartate + ATP = (2S)-2-[5-amino-1-(5-phospho-beta-D-ribosyl)imidazole-4-carboxamido]succinate + ADP + phosphate + 2 H(+). The protein operates within purine metabolism; IMP biosynthesis via de novo pathway; 5-amino-1-(5-phospho-D-ribosyl)imidazole-4-carboxamide from 5-amino-1-(5-phospho-D-ribosyl)imidazole-4-carboxylate: step 1/2. This chain is Phosphoribosylaminoimidazole-succinocarboxamide synthase, found in Pseudomonas fluorescens (strain ATCC BAA-477 / NRRL B-23932 / Pf-5).